Consider the following 229-residue polypeptide: Protein TraJ (229 aa).

The protein resides in the cytoplasm. In terms of biological role, this protein is essential for positively regulating the expression of transfer genes that are involved in the conjugal transfer of DNA between bacterial cells. The sequence is that of Protein TraJ (traJ) from Escherichia coli (strain K12).